The primary structure comprises 527 residues: Zinc finger C2HC domain-containing protein 1C (527 aa).

Disordered stretches follow at residues 18 to 105 (HNKT…GQGK) and 145 to 170 (VHRK…LPDS). Polar residues predominate over residues 50-61 (NSFQSKLWSNTE). Positions 71–85 (RPKRNVCTKARRHSC) are enriched in basic residues. Residues 93–102 (QQGSGNNAQG) show a composition bias toward low complexity. A coiled-coil region spans residues 207-254 (TQIQRLEAAGESLQKEIRRKEILLQEKLKKTEEGLRRMQKEKKQAIFQ). Disordered regions lie at residues 264–316 (LPRR…LSDY) and 352–379 (LGST…EPEL). Over residues 286–298 (FRSEVFSRNRGED) the composition is skewed to basic and acidic residues. Over residues 301–312 (CDQAQENPSPRQ) the composition is skewed to polar residues. A compositionally biased stretch (low complexity) spans 358 to 374 (ESSRSGTPGSSGSSSST). 2 C2HC/C3H-type zinc fingers span residues 378–407 (ELAK…MQGS) and 489–518 (DYVQ…IKNR). Residues cysteine 382, cysteine 385, histidine 397, cysteine 401, cysteine 493, cysteine 496, histidine 508, and cysteine 512 each coordinate Zn(2+). The segment at 507–527 (RHIPKCKTIKNRPPPPRRHDS) is disordered.

Belongs to the ZC2HC1 family. Zn(2+) is required as a cofactor.

The sequence is that of Zinc finger C2HC domain-containing protein 1C (Zc2hc1c) from Mus musculus (Mouse).